The following is a 495-amino-acid chain: MPQLLQNINGIIEAFRRYARTEGNCTALTRGELKRLLEQEFADVIVKPHDPATVDEVLRLLDEDHTGTVEFKEFLVLVFKVAQACFKTLSESAEGACGSQESGSLHSGASQELGEGQRSGTEVGRAGKGQHYEGSSHRQSQQGSRGQNRPGVQTQGQATGSAWVSSYDRQAESQSQERISPQIQLSGQTEQTQKAGEGKRNQTTEMRPERQPQTREQDRAHQTGETVTGSGTQTQAGATQTVEQDSSHQTGRTSKQTQEATNDQNRGTETHGQGRSQTSQAVTGGHAQIQAGTHTQTPTQTVEQDSSHQTGSTSTQTQESTNGQNRGTEIHGQGRSQTSQAVTGGHTQIQAGSHTETVEQDRSQTVSHGGAREQGQTQTQPGSGQRWMQVSNPEAGETVPGGQAQTGASTESGRQEWSSTHPRRCVTEGQGDRQPTVVGEEWVDDHSRETVILRLDQGNLHTSVSSAQGQDAAQSEEKRGITARELYSYLRSTKP.

The region spanning 49-84 (HDPATVDEVLRLLDEDHTGTVEFKEFLVLVFKVAQA) is the EF-hand domain. Ca(2+) is bound by residues Asp-62, Asp-64, Thr-66, Thr-68, and Glu-73. 2 disordered regions span residues 96–439 (ACGS…TVVG) and 460–481 (LHTSVSSAQGQDAAQSEEKRGI). Over residues 99-110 (SQESGSLHSGAS) the composition is skewed to polar residues. Residues 137-151 (HRQSQQGSRGQNRPG) are compositionally biased toward low complexity. Polar residues predominate over residues 152–194 (VQTQGQATGSAWVSSYDRQAESQSQERISPQIQLSGQTEQTQK). A compositionally biased stretch (basic and acidic residues) spans 196-222 (GEGKRNQTTEMRPERQPQTREQDRAHQ). Positions 226–242 (TVTGSGTQTQAGATQTV) are enriched in low complexity. 2 stretches are compositionally biased toward polar residues: residues 243 to 282 (EQDSSHQTGRTSKQTQEATNDQNRGTETHGQGRSQTSQAV) and 290 to 303 (QAGTHTQTPTQTVE). The span at 307–324 (SHQTGSTSTQTQESTNGQ) shows a compositional bias: low complexity. Residues 334 to 355 (GRSQTSQAVTGGHTQIQAGSHT) are compositionally biased toward polar residues. Low complexity predominate over residues 374 to 385 (QGQTQTQPGSGQ). Polar residues-rich tracts occupy residues 403-420 (QAQTGASTESGRQEWSST) and 460-473 (LHTSVSSAQGQDAA).

The protein belongs to the S100-fused protein family. As to quaternary structure, homodimer. In terms of tissue distribution, expressed in the basal skin layer (at protein level). Squamous epithelia cell-specific. Expressed in the esophagus (periphery of the cells of the granular and the upper spinous layers), foreskin (granular and lower cornified cells), scalp skin (granular layer), inner root sheath of the hair follicle and in primary keratinocytes (at protein level). Expressed in the squamous epithelium of the cervix, esophagus, foreskin and larynx. Expressed in the fetal bladder and scalp skin. Expressed at very low levels in the lung, kidney, uterus, skeletal muscle, heart and fetal brain. Undetectable or barely detectable in esophageal and oral squamous cell carcinoma compared with the matched adjacent normal esophageal mucosa. Undetectable or barely detectable in larynx and esophagus from patients with pH-documented laryngopharyngeal reflux (LPR).

The protein resides in the cytoplasm. Its function is as follows. Promotes cell proliferation, G1/S cell cycle progression and induces expression of the cell cycle regulator CCND1. Regulates proliferation induced by pro-inflammatory cytokine response via activation of NFKB1 and PI3K/AKT signaling pathways. This chain is Cornulin (CRNN), found in Homo sapiens (Human).